We begin with the raw amino-acid sequence, 341 residues long: 1-aminocyclopropane-1-carboxylate deaminase (341 aa).

Position 1 is an N-acetylserine (serine 1). The residue at position 51 (lysine 51) is an N6-(pyridoxal phosphate)lysine. The active-site Nucleophile is the serine 78.

This sequence belongs to the ACC deaminase/D-cysteine desulfhydrase family. In terms of assembly, homodimer. It depends on pyridoxal 5'-phosphate as a cofactor.

It catalyses the reaction 1-aminocyclopropane-1-carboxylate + H2O = 2-oxobutanoate + NH4(+). Functionally, catalyzes a cyclopropane ring-opening reaction, the irreversible conversion of 1-aminocyclopropane-1-carboxylate (ACC) to ammonia and alpha-ketobutyrate. The protein is 1-aminocyclopropane-1-carboxylate deaminase of Cyberlindnera saturnus (Yeast).